A 426-amino-acid polypeptide reads, in one-letter code: COP9 signalosome complex subunit 6 (426 aa).

One can recognise an MPN domain in the interval 14-155; the sequence is VLLHPLVIMQ…AGTTRKLPLF (142 aa). Residues 320–426 form a disordered region; that stretch reads PVRFKSQHLG…NESDESSQAS (107 aa). Acidic residues predominate over residues 334 to 347; it reads ADDDDYFDDEDLEN.

This sequence belongs to the peptidase M67A family. CSN6 subfamily. Component of the CSN complex, probably composed of csn-1, csn-2, csn-3, csn-4, csn-5, csn-6 and csn-7. Within the complex it probably interacts directly with csn-2 and csn-4. Interacts with rbx-1.

Its subcellular location is the cytoplasm. The protein localises to the nucleus. Functionally, component of the COP9 signalosome complex (CSN), a complex involved in various cellular and developmental processes. The CSN complex is an essential regulator of the ubiquitin (Ubl) conjugation pathway by mediating the deneddylation of the cullin subunits of the SCF-type E3 ligase complexes, leading to decrease the Ubl ligase activity of SCF. The CSN complex plays an essential role in embryogenesis and oogenesis and is required to regulate microtubule stability in the early embryo. Mediates mei-3/katanin targeting for degradation at the meiosis to mitosis transition via deneddylation of cul-3. This Caenorhabditis elegans protein is COP9 signalosome complex subunit 6 (csn-6).